Here is a 295-residue protein sequence, read N- to C-terminus: Craniofacial development protein 1 (295 aa).

Acidic residues-rich tracts occupy residues 1–18 and 25–43; these read MEEFDSEDFSTSDEDEDY and YSEDDVNELVKEDEVDGEE. Disordered regions lie at residues 1-153 and 188-217; these read MEEF…LDKP and FLKQTEREKPQALVTSPATPLPAGSGIKRA. Positions 49–65 are enriched in basic residues; that stretch reads KGKRRKAQGIPARKRKQ. 4 positions are modified to phosphoserine: S80, S83, S84, and S112. K146 is covalently cross-linked (Glycyl lysine isopeptide (Lys-Gly) (interchain with G-Cter in SUMO2)). Residues 174-213 form a hydrophilic region; sequence VTKEVDAASKEAKSFLKQTEREKPQALVTSPATPLPAGSG. Residues 188–197 show a composition bias toward basic and acidic residues; that stretch reads FLKQTEREKP. S212 is subject to Phosphoserine. Residues 214–295 form the BCNT-C domain; that stretch reads IKRASGMSSL…RDLRLSKMKP (82 aa). K215 is modified (N6-methyllysine). S246 is modified (phosphoserine).

In terms of tissue distribution, expressed in lung, liver and heart, with higher expression in teeth.

It localises to the chromosome. The protein resides in the centromere. The protein localises to the kinetochore. Functionally, may play a role during embryogenesis. May modulate tooth organogenesis since alterations of this protein function affect tooth organs size as well as individual cell fate and survival. In embryonic cells, blockage of the function results in increased number of apoptotic cells, reduced proliferation, alterations in cell shape and fibronection matrix synthesis. The polypeptide is Craniofacial development protein 1 (Cfdp1) (Mus musculus (Mouse)).